The primary structure comprises 339 residues: Protein H339R (339 aa).

This sequence belongs to the asfivirus H339R family. As to quaternary structure, interacts with host NACA (alpha chain of nascent polypeptide-associated complex).

It is found in the host cytoplasm. It localises to the host nucleus. This chain is Protein H339R, found in African swine fever virus (isolate Tick/South Africa/Pretoriuskop Pr4/1996) (ASFV).